Here is a 585-residue protein sequence, read N- to C-terminus: Membrane protein insertase YidC (585 aa).

Helical transmembrane passes span 5–25 (SVTGLALIALIMIVWLQFMSP), 338–358 (FGWDWLTRPFAEFVILPAFTW), 362–382 (FVSNYGLIIIIFAFLIKLVTY), 432–452 (LGGCLPVVLQMPLLFAMFYVF), 482–502 (IPMYGSHIALLPILMAVTVFL), and 518–538 (IMLYMFPAMMLLFFNNMPSGL).

This sequence belongs to the OXA1/ALB3/YidC family. Type 1 subfamily. As to quaternary structure, interacts with the Sec translocase complex via SecD. Specifically interacts with transmembrane segments of nascent integral membrane proteins during membrane integration.

The protein localises to the cell inner membrane. In terms of biological role, required for the insertion and/or proper folding and/or complex formation of integral membrane proteins into the membrane. Involved in integration of membrane proteins that insert both dependently and independently of the Sec translocase complex, as well as at least some lipoproteins. Aids folding of multispanning membrane proteins. This chain is Membrane protein insertase YidC, found in Chlorobium luteolum (strain DSM 273 / BCRC 81028 / 2530) (Pelodictyon luteolum).